Reading from the N-terminus, the 406-residue chain is S-adenosylmethionine synthase (406 aa).

ATP is bound at residue H5. D7 contributes to the Mg(2+) binding site. Residue E33 participates in K(+) binding. Positions 46 and 89 each coordinate L-methionine. Residues 89 to 99 (QSPDIAQGVDT) are flexible loop. Residues 164–166 (DGK), 240–241 (KF), D249, 255–256 (RK), A272, and K276 contribute to the ATP site. L-methionine is bound at residue D249. K280 lines the L-methionine pocket.

The protein belongs to the AdoMet synthase family. As to quaternary structure, homotetramer; dimer of dimers. Mg(2+) is required as a cofactor. It depends on K(+) as a cofactor.

It is found in the cytoplasm. It catalyses the reaction L-methionine + ATP + H2O = S-adenosyl-L-methionine + phosphate + diphosphate. The protein operates within amino-acid biosynthesis; S-adenosyl-L-methionine biosynthesis; S-adenosyl-L-methionine from L-methionine: step 1/1. Its function is as follows. Catalyzes the formation of S-adenosylmethionine (AdoMet) from methionine and ATP. The overall synthetic reaction is composed of two sequential steps, AdoMet formation and the subsequent tripolyphosphate hydrolysis which occurs prior to release of AdoMet from the enzyme. This Synechococcus sp. (strain ATCC 27144 / PCC 6301 / SAUG 1402/1) (Anacystis nidulans) protein is S-adenosylmethionine synthase.